Consider the following 1061-residue polypeptide: DNA primase TraC (1061 aa).

Positions 850 to 938 (PALVIGEGYA…GKAIFPIFAP (89 aa)) constitute a Toprim domain. The interval 1034 to 1061 (EGQRQKVQQLKQQDIEQQEQRQRRARTY) is disordered.

In terms of biological role, required for autonomous replication in E.coli. Transferred into the recipient cell during bacterial conjugation. Catalyzes the synthesis of short oligoribonucleotide primers with CpA or pCpA at their 5'-termini on a single-stranded template DNA. This chain is DNA primase TraC (traC), found in Escherichia coli.